A 248-amino-acid polypeptide reads, in one-letter code: UPF0736 protein BCG9842_B4111 (248 aa).

Belongs to the UPF0736 family.

This Bacillus cereus (strain G9842) protein is UPF0736 protein BCG9842_B4111.